The sequence spans 70 residues: Putative membrane protein insertion efficiency factor (70 aa).

The protein belongs to the UPF0161 family.

It localises to the cell membrane. Functionally, could be involved in insertion of integral membrane proteins into the membrane. This chain is Putative membrane protein insertion efficiency factor, found in Finegoldia magna (strain ATCC 29328 / DSM 20472 / WAL 2508) (Peptostreptococcus magnus).